Consider the following 227-residue polypeptide: A-type potassium channel modulatory protein KCNIP1 (227 aa).

The 57-residue stretch at 38–94 (LEMTMVCHRPEGLEQLEAQTNFTKRELQVLYRGFKNECPSGVVNEETFKQIYAQFFP) folds into the EF-hand 1; degenerate domain. EF-hand domains follow at residues 97–132 (DASTYAHYLFNAFDTTQTGSVKFEDFVTALSILLRG), 133–168 (TVHEKLRWTFNLYDINKDGYINKEEMMDIVKAIYDM), and 181–216 (TPRQHVDVFFQKMDKNKDGIVTLDEFLESCQEDDNI). Ca(2+) contacts are provided by aspartate 146, asparagine 148, aspartate 150, tyrosine 152, glutamate 157, aspartate 194, asparagine 196, aspartate 198, and glutamate 205. Positions 214-227 (DNIMRSLQLFQNVM) are interaction with KCND2.

This sequence belongs to the recoverin family. In terms of assembly, component of heteromultimeric potassium channels. Identified in potassium channel complexes containing KCND1, KCND2, KCND3, KCNIP1, KCNIP2, KCNIP3, KCNIP4, DPP6 and DPP10. Part of a heterooctamer composed of the tetrameric channel and four KCNIP1 chains. Probably part of a complex consisting of KCNIP1, KCNIP2 isoform 3 and KCND2. Self-associates to form homodimers and homotetramers. Interacts with KCNIP2 isoform 3 in a calcium-dependent manner. Interacts with KCND2; this interaction mediates the capture of both the N- and C-terminus of KCND2, thus preventing KCND2 N-type inactivation and modulates the channel gating kinetics. Interacts with KCND3; each KCNIP1 monomer interacts with two adjacent KCND3 subunits, through both the N-terminal inactivation ball of a KCND3 subunit and a C-terminal helix from the adjacent KCND3 subunit, clamping them together; this interaction stabilizes the tetrameric form and modulates the channel gating kinetics namely channel activation and inactivation kinetics and rate of recovery from inactivation. In terms of tissue distribution, detected in hippocampus and in the molecular layer of the dentate gyrus (at protein level). Isoform 1 and isoform 2 are predominantly expressed at equal levels in brain. Colocalizes with KCND3 in inhibitory interneurons in cortex and hippocampus and in striatal interneurons.

The protein resides in the cell membrane. It is found in the cytoplasm. The protein localises to the cell projection. It localises to the dendrite. In terms of biological role, regulatory subunit of Kv4/D (Shal)-type voltage-gated rapidly inactivating A-type potassium channels. Regulates channel density, inactivation kinetics and rate of recovery from inactivation in a calcium-dependent and isoform-specific manner. Modulates KCND2/Kv4.2 currents. In vitro, modulates KCND1/Kv4.1 currents. Increases the presence of KCND2 at the cell surface. The chain is A-type potassium channel modulatory protein KCNIP1 from Rattus norvegicus (Rat).